A 247-amino-acid polypeptide reads, in one-letter code: Putative urease accessory protein UreD homolog (247 aa).

Belongs to the UreD family. UreD, UreF and UreG form a complex that acts as a GTP-hydrolysis-dependent molecular chaperone, activating the urease apoprotein by helping to assemble the nickel containing metallocenter of UreC. The UreE protein probably delivers the nickel.

Its subcellular location is the cytoplasm. Required for maturation of urease via the functional incorporation of the urease nickel metallocenter. The protein is Putative urease accessory protein UreD homolog of Escherichia coli O157:H7.